Consider the following 419-residue polypeptide: L-rhamnose isomerase (419 aa).

Mn(2+) is bound by residues H262, D294, and D296.

Belongs to the rhamnose isomerase family. As to quaternary structure, homotetramer. It depends on Mn(2+) as a cofactor.

It is found in the cytoplasm. It carries out the reaction L-rhamnopyranose = L-rhamnulose. It participates in carbohydrate degradation; L-rhamnose degradation; glycerone phosphate from L-rhamnose: step 1/3. Functionally, catalyzes the interconversion of L-rhamnose and L-rhamnulose. The chain is L-rhamnose isomerase from Escherichia coli O7:K1 (strain IAI39 / ExPEC).